A 340-amino-acid chain; its full sequence is Heat-inducible transcription repressor HrcA (340 aa).

Belongs to the HrcA family.

Negative regulator of class I heat shock genes (grpE-dnaK-dnaJ and groELS operons). Prevents heat-shock induction of these operons. In Mycoplasmopsis synoviae (strain 53) (Mycoplasma synoviae), this protein is Heat-inducible transcription repressor HrcA.